Consider the following 435-residue polypeptide: Acetylcholine receptor-like protein cup-4 (435 aa).

Positions 1-24 are cleaved as a signal peptide; sequence MRLLLIFTVIFVFYLAILKRDVNA. Asparagine 41, asparagine 68, asparagine 237, and asparagine 249 each carry an N-linked (GlcNAc...) asparagine glycan. 2 consecutive transmembrane segments (helical) span residues 298–318 and 341–361; these read VSFFAPTVSLAFVINLMAIYL and ITLFHILLISNIVSAVFHGVL. Asparagine 403 carries N-linked (GlcNAc...) asparagine glycosylation. The chain crosses the membrane as a helical span at residues 413–433; sequence PLAGLAMFVYFVIMFILYLVV.

This sequence belongs to the ligand-gated ion channel (TC 1.A.9) family. Acetylcholine receptor (TC 1.A.9.1) subfamily.

The protein resides in the cytoplasmic vesicle membrane. In terms of biological role, thought to regulate endocytosis in coelomocytes through modulation of phospholipase C activity. Possible acetylcholine receptor. This Caenorhabditis briggsae protein is Acetylcholine receptor-like protein cup-4.